A 147-amino-acid polypeptide reads, in one-letter code: Diaminohydroxyphosphoribosylamino-pyrimidine deaminase (147 aa).

One can recognise a CMP/dCMP-type deaminase domain in the interval 1 to 123 (MNDIFYMKRA…YLKKHGICVK (123 aa)). Position 50 (His50) interacts with Zn(2+). Glu52 functions as the Proton donor in the catalytic mechanism. Cys75 and Cys84 together coordinate Zn(2+).

The protein belongs to the cytidine and deoxycytidylate deaminase family. Requires Zn(2+) as cofactor.

It carries out the reaction 2,5-diamino-6-hydroxy-4-(5-phosphoribosylamino)-pyrimidine + H2O + H(+) = 5-amino-6-(5-phospho-D-ribosylamino)uracil + NH4(+). Its pathway is cofactor biosynthesis; riboflavin biosynthesis; 5-amino-6-(D-ribitylamino)uracil from GTP: step 2/4. The sequence is that of Diaminohydroxyphosphoribosylamino-pyrimidine deaminase (ribD1) from Buchnera aphidicola subsp. Acyrthosiphon pisum (strain APS) (Acyrthosiphon pisum symbiotic bacterium).